A 186-amino-acid polypeptide reads, in one-letter code: Holliday junction branch migration complex subunit RuvA (186 aa).

The interval 1-63 (MNDYINGFLY…DNHFKYYGFF (63 aa)) is domain I. The segment at 64-137 (NQLVRDLFEI…QKELFNNKIS (74 aa)) is domain II. Residue serine 137 is a region of interest, flexible linker. The segment at 137 to 186 (SEKKNKVITSLEKLGYKTKDIYKIIINVDEDLTIDELTKYVLEKLSYINN) is domain III.

Belongs to the RuvA family. Homotetramer. Forms an RuvA(8)-RuvB(12)-Holliday junction (HJ) complex. HJ DNA is sandwiched between 2 RuvA tetramers; dsDNA enters through RuvA and exits via RuvB. An RuvB hexamer assembles on each DNA strand where it exits the tetramer. Each RuvB hexamer is contacted by two RuvA subunits (via domain III) on 2 adjacent RuvB subunits; this complex drives branch migration. In the full resolvosome a probable DNA-RuvA(4)-RuvB(12)-RuvC(2) complex forms which resolves the HJ.

Its subcellular location is the cytoplasm. Its function is as follows. The RuvA-RuvB-RuvC complex processes Holliday junction (HJ) DNA during genetic recombination and DNA repair, while the RuvA-RuvB complex plays an important role in the rescue of blocked DNA replication forks via replication fork reversal (RFR). RuvA specifically binds to HJ cruciform DNA, conferring on it an open structure. The RuvB hexamer acts as an ATP-dependent pump, pulling dsDNA into and through the RuvAB complex. HJ branch migration allows RuvC to scan DNA until it finds its consensus sequence, where it cleaves and resolves the cruciform DNA. This chain is Holliday junction branch migration complex subunit RuvA, found in Mycoplasma capricolum subsp. capricolum (strain California kid / ATCC 27343 / NCTC 10154).